The sequence spans 113 residues: UPF0102 protein Mfla_2283 (113 aa).

The protein belongs to the UPF0102 family.

The sequence is that of UPF0102 protein Mfla_2283 from Methylobacillus flagellatus (strain ATCC 51484 / DSM 6875 / VKM B-1610 / KT).